We begin with the raw amino-acid sequence, 641 residues long: Acetyl-coenzyme A synthetase (641 aa).

CoA contacts are provided by residues 186–189 (RGGK) and T304. ATP contacts are provided by residues 380–382 (GEP), 404–409 (DTWWQT), D493, and R508. Residue S516 participates in CoA binding. R519 is a binding site for ATP. Mg(2+) is bound by residues V530, H532, and I535. K602 bears the N6-acetyllysine mark.

This sequence belongs to the ATP-dependent AMP-binding enzyme family. Requires Mg(2+) as cofactor. Acetylated. Deacetylation by the SIR2-homolog deacetylase activates the enzyme.

The catalysed reaction is acetate + ATP + CoA = acetyl-CoA + AMP + diphosphate. Catalyzes the conversion of acetate into acetyl-CoA (AcCoA), an essential intermediate at the junction of anabolic and catabolic pathways. AcsA undergoes a two-step reaction. In the first half reaction, AcsA combines acetate with ATP to form acetyl-adenylate (AcAMP) intermediate. In the second half reaction, it can then transfer the acetyl group from AcAMP to the sulfhydryl group of CoA, forming the product AcCoA. The protein is Acetyl-coenzyme A synthetase of Gamma-proteobacterium EBAC31A08.